We begin with the raw amino-acid sequence, 316 residues long: B3 domain-containing protein Os04g0581400 (316 aa).

Residues 1–100 (MEFATTSSRF…GSGGGGGGED (100 aa)) form a disordered region. The span at 13 to 36 (EEEEEEEGEQEMEQEQDEEEEEAE) shows a compositional bias: acidic residues. The span at 46-77 (TSAAAAATASSSSPTSVSPSATASAAASTSAS) shows a compositional bias: low complexity. A compositionally biased stretch (gly residues) spans 88–98 (GASGSGGGGGG). A DNA-binding region (TF-B3) is located at residues 110–215 (FDKVVTPSDV…RLFIDWKRRA (106 aa)). The interval 239 to 290 (GGAGASSCRPRRPPRSTSITAFARASTSATSTPLCRRGSSSSSAPQGRGFIS) is disordered. Low complexity predominate over residues 253–270 (RSTSITAFARASTSATST).

The protein resides in the nucleus. The sequence is that of B3 domain-containing protein Os04g0581400 from Oryza sativa subsp. japonica (Rice).